We begin with the raw amino-acid sequence, 324 residues long: Quinolinate synthase 1 (324 aa).

2 residues coordinate iminosuccinate: His-48 and Ser-66. Cys-111 provides a ligand contact to [4Fe-4S] cluster. Residues 137–139 (YVN) and Ser-154 contribute to the iminosuccinate site. Cys-196 provides a ligand contact to [4Fe-4S] cluster. Iminosuccinate is bound by residues 222–224 (HPE) and Thr-239. A [4Fe-4S] cluster-binding site is contributed by Cys-282.

This sequence belongs to the quinolinate synthase family. Type 2 subfamily. The cofactor is [4Fe-4S] cluster.

The protein localises to the cytoplasm. The catalysed reaction is iminosuccinate + dihydroxyacetone phosphate = quinolinate + phosphate + 2 H2O + H(+). Its pathway is cofactor biosynthesis; NAD(+) biosynthesis; quinolinate from iminoaspartate: step 1/1. In terms of biological role, catalyzes the condensation of iminoaspartate with dihydroxyacetone phosphate to form quinolinate. This chain is Quinolinate synthase 1, found in Mesorhizobium japonicum (strain LMG 29417 / CECT 9101 / MAFF 303099) (Mesorhizobium loti (strain MAFF 303099)).